The following is a 275-amino-acid chain: Sulfur carrier protein FdhD (275 aa).

The active-site Cysteine persulfide intermediate is the Cys-121. 258–263 (FSKPGR) contacts Mo-bis(molybdopterin guanine dinucleotide).

It belongs to the FdhD family.

It is found in the cytoplasm. In terms of biological role, required for formate dehydrogenase (FDH) activity. Acts as a sulfur carrier protein that transfers sulfur from IscS to the molybdenum cofactor prior to its insertion into FDH. This is Sulfur carrier protein FdhD from Yersinia enterocolitica serotype O:8 / biotype 1B (strain NCTC 13174 / 8081).